The sequence spans 372 residues: MKAGATSMWASCCGLLNEVMGTGAVRGQQSGFAGATGPFRFTPNPEFSTYPPAATEGPNIVCKACGLSFSVFRKKHVCCDCKKDFCSVCSVLQENLRRCSTCHLLQETAFQRPQLMRLKVKDLRQYLILRNIPTDTCREKEDLVDLVLCHHGLGSEDDMDTSSLNSSRSQTSSFFTRSFFSNYTAPSATMSSFQGELMDGDQTSRSGVPAQVQSEITSANTEDDDDDDDEDDDDEEENAEDQNPGLSKERVRASLSDLSSLDDVEGMSVRQLKEILARNFVNYSGCCEKWELVEKVNRLYKENEENQKSYGERLQLQDEEDDSLCRICMDAVIDCVLLECGHMVTCTKCGKRMSECPICRQYVVRAVHVFKS.

The FYVE-type zinc finger occupies 56–107 (EGPNIVCKACGLSFSVFRKKHVCCDCKKDFCSVCSVLQENLRRCSTCHLLQE). An SAP 1 domain is found at 115-134 (LMRLKVKDLRQYLILRNIPT). Serine 169 carries the post-translational modification Phosphoserine. The tract at residues 194–252 (QGELMDGDQTSRSGVPAQVQSEITSANTEDDDDDDDEDDDDEEENAEDQNPGLSKERVR) is disordered. The span at 201-220 (DQTSRSGVPAQVQSEITSAN) shows a compositional bias: polar residues. The segment covering 221–240 (TEDDDDDDDEDDDDEEENAE) has biased composition (acidic residues). 2 positions are modified to phosphoserine: serine 254 and serine 256. The region spanning 264–278 (VEGMSVRQLKEILAR) is the SAP 2 domain. The RING-type zinc-finger motif lies at 325–360 (CRICMDAVIDCVLLECGHMVTCTKCGKRMSECPICR).

As to quaternary structure, interacts with CASP8 and CASP10. Interacts with p53/TP53; involved in p53/TP53 ubiquitination. Interacts (via RING-type zinc finger) with MDM2; the interaction stabilizes MDM2. Interacts (via RING-type zinc finger) with PPARGC1A. Interacts with NOD1. In terms of processing, autoubiquitinated (in vitro). Proteolytically cleaved by caspases upon induction of apoptosis by TNF.

It is found in the cell membrane. The protein localises to the endomembrane system. The protein resides in the nucleus. It localises to the nucleus speckle. Its subcellular location is the cytoplasm. It is found in the cytosol. The enzyme catalyses S-ubiquitinyl-[E2 ubiquitin-conjugating enzyme]-L-cysteine + [acceptor protein]-L-lysine = [E2 ubiquitin-conjugating enzyme]-L-cysteine + N(6)-ubiquitinyl-[acceptor protein]-L-lysine.. It participates in protein modification; protein ubiquitination. Functionally, E3 ubiquitin-protein ligase that regulates several biological processes through the ubiquitin-mediated proteasomal degradation of various target proteins. Ubiquitinates the caspases CASP8 and CASP10, promoting their proteasomal degradation, to negatively regulate cell death downstream of death domain receptors in the extrinsic pathway of apoptosis. May mediate 'Lys-48'-linked polyubiquitination of RIPK1 and its subsequent proteasomal degradation thereby indirectly regulating the tumor necrosis factor-mediated signaling pathway. Negatively regulates p53/TP53 through its direct ubiquitination and targeting to proteasomal degradation. Indirectly, may also negatively regulate p53/TP53 through ubiquitination and degradation of SFN. Mediates PPARGC1A proteasomal degradation probably through ubiquitination thereby indirectly regulating the metabolism of brown fat cells. Possibly involved in innate immunity, through 'Lys-48'-linked polyubiquitination of NOD1 and its subsequent proteasomal degradation. This Pongo abelii (Sumatran orangutan) protein is E3 ubiquitin-protein ligase RNF34 (RNF34).